A 1219-amino-acid chain; its full sequence is N-acetylglucosamine-1-phosphotransferase subunits alpha/beta (1219 aa).

A helical membrane pass occupies residues 27-47 (LCFGGLVLMIVSAFQFGEVVV). Residues N88, N119, N153, N292, and N381 are each glycosylated (N-linked (GlcNAc...) asparagine). 4 cysteine pairs are disulfide-bonded: C443–C466, C457–C473, C508–C531, and C522–C538. LNR repeat units follow at residues 443–478 (CAEG…GSSR) and 508–538 (CNQG…VGDC). D454 contributes to the Ca(2+) binding site. The N-linked (GlcNAc...) asparagine glycan is linked to N462. 5 residues coordinate Ca(2+): D469, D472, D519, D534, and D537. N-linked (GlcNAc...) asparagine glycosylation is found at N554, N610, N617, N645, N696, N726, N823, and N974. The segment at 640–666 (ELPKSNTSTPVRDKEEEPKPTVATPEP) is disordered. The DMAP1-binding domain maps to 696 to 804 (NETLLPDEVK…DDVTTKAQSR (109 aa)). Positions 970–1005 (VQQLNISEVFDEIDTDHSGVLSDREIRTLATRIHEL) constitute an EF-hand domain. Ca(2+) contacts are provided by D983, D985, S987, and E994. N-linked (GlcNAc...) asparagine glycans are attached at residues N1021, N1029, and N1094. The helical transmembrane segment at 1180–1200 (VLVTLVVFTVMSFFAEQLVML) threads the bilayer.

The protein belongs to the stealth family. Hexamer of two alpha, two beta and two gamma (GNPTG) subunits; disulfide-linked. The alpha and/or the beta subunits of the enzyme constitute the catalytic subunits. The alpha- and beta-subunits are generated by a proteolytic cleavage by mbtps1 protease at the Gln-893-Asp-894 bond.

It localises to the golgi apparatus membrane. The catalysed reaction is N(4)-[alpha-D-mannosyl-(1-&gt;2)-alpha-D-mannosyl-(glycan)]-L-asparaginyl-[protein] + UDP-N-acetyl-alpha-D-glucosamine = N(4)-[6-(N-acetyl-alpha-D-glucosaminyl-1-phospho)-alpha-D-mannosyl-(1-&gt;2)-alpha-D-mannosyl-(glycan)]-L-asparaginyl-[protein] + UMP + H(+). Functionally, catalyzes the formation of mannose 6-phosphate (M6P) markers on high mannose type oligosaccharides in the Golgi apparatus. M6P residues are required to bind to the M6P receptors (MPR), which mediate the vesicular transport of lysosomal enzymes to the endosomal/prelysosomal compartment. This Danio rerio (Zebrafish) protein is N-acetylglucosamine-1-phosphotransferase subunits alpha/beta (gnptab).